The sequence spans 149 residues: Transcriptional repressor NrdR (149 aa).

The segment at 3–34 is a zinc-finger region; that stretch reads CPFCSTEETKVIDSRLVSEGYQVRRRRECGNC. One can recognise an ATP-cone domain in the interval 49–139; it reads PKVIKNDGTR…VYLSFDDINQ (91 aa).

The protein belongs to the NrdR family. The cofactor is Zn(2+).

In terms of biological role, negatively regulates transcription of bacterial ribonucleotide reductase nrd genes and operons by binding to NrdR-boxes. The polypeptide is Transcriptional repressor NrdR (Pasteurella multocida (strain Pm70)).